We begin with the raw amino-acid sequence, 219 residues long: Antigen 5 like allergen Cul n 1 (219 aa).

A signal peptide spans 1–19 (MIKKLSIVILFSCISFVLS). 3 cysteine pairs are disulfide-bonded: Cys23–Cys45, Cys28–Cys124, and Cys55–Cys117. One can recognise an SCP domain in the interval 73 to 211 (LKVHNRLRNK…RHSGNKYFFW (139 aa)).

The protein belongs to the CRISP family. In terms of tissue distribution, expressed in salivary glands.

Its subcellular location is the secreted. The chain is Antigen 5 like allergen Cul n 1 from Culicoides nubeculosus (Biting midge).